A 273-amino-acid chain; its full sequence is tRNA pseudouridine synthase B (273 aa).

The active-site Nucleophile is the Asp-38.

It belongs to the pseudouridine synthase TruB family. Type 1 subfamily.

The enzyme catalyses uridine(55) in tRNA = pseudouridine(55) in tRNA. In terms of biological role, responsible for synthesis of pseudouridine from uracil-55 in the psi GC loop of transfer RNAs. This chain is tRNA pseudouridine synthase B, found in Campylobacter curvus (strain 525.92).